The sequence spans 346 residues: UPF0283 membrane protein VP1870 (346 aa).

Residues 1 to 30 (MSELKQKQIFSEKALEKEQQSDSPELTAQK) are disordered. The segment covering 21–30 (SDSPELTAQK) has biased composition (polar residues). 2 consecutive transmembrane segments (helical) span residues 73-93 (VFAT…VTAV) and 98-118 (WLAL…LGAI).

It belongs to the UPF0283 family.

The protein localises to the cell inner membrane. This is UPF0283 membrane protein VP1870 from Vibrio parahaemolyticus serotype O3:K6 (strain RIMD 2210633).